Reading from the N-terminus, the 522-residue chain is MVLMILPIIGSVSASEGLVAMVTLCLVYMIMKYMHTEIPEGLKRLPGPKPLPIIGNMLEVHNNPHLSLTAMSERYGSVFQIQIGMRPVVVLSGNETVRQALIKQGEDFAGRSDLYSFKFINDGKSLAFSTDKAGVWRARRKLAMSALRSFATLEGTTPEYSCALEEHVLKEGEYLVKQLTSVMDVSGSFDPFRHIVVSVANVICGMCFGRRYSHDDQELLGLVNMSDEFGQVVGSGNPADFIPILRYLPNRTMKRFMDINDRFNNFVQKIVSEHYESYDKDNIRDITDSLIDHCEDRKLDENANIQVSDEKIVGIVNDLFGAGFDTISTALSWAVVYLVAYPETQERLHQELKEKVGMIRTPRLSDKINLPLLEAFILEIFRHSSFLPFTIPHCTIKDTSLNGYFIPKDTCVFINQWQVNHDPELWKEPSSFNPDRFLSADGTELNKLEGEKVLVFGMGKRRCIGEAIGRNEVYLFLAILLQRLRFQEKPGHPLDMTPEYGLTMKHKRCQLKASMRPWGQEE.

Phe229 lines the substrate pocket. Position 463 (Cys463) interacts with heme.

It belongs to the cytochrome P450 family. Requires heme as cofactor. Liver.

It is found in the endoplasmic reticulum membrane. It localises to the microsome membrane. The catalysed reaction is an organic molecule + reduced [NADPH--hemoprotein reductase] + O2 = an alcohol + oxidized [NADPH--hemoprotein reductase] + H2O + H(+). Its function is as follows. Cytochromes P450 are a group of heme-thiolate monooxygenases. They oxidize a variety of structurally unrelated compounds, including steroids, fatty acids, and xenobiotics. The sequence is that of Cytochrome P450 1A3 (cyp1a3) from Oncorhynchus mykiss (Rainbow trout).